A 407-amino-acid polypeptide reads, in one-letter code: Large ribosomal subunit protein uL3-like (407 aa).

The segment covering 1-31 has biased composition (basic residues); that stretch reads MSHRKFSAPRHGHLGFLPHKRSHRHRGKVKT. Disordered stretches follow at residues 1–35 and 383–407; these read MSHR…WPRD and QEKR…SGDL. Residues 394–407 show a composition bias toward basic and acidic residues; sequence KHLEKEKPETSGDL.

It belongs to the universal ribosomal protein uL3 family. In terms of assembly, component of the large ribosomal subunit in striated muscle cells.

In terms of biological role, heart- and skeletal muscle-specific component of the ribosome, which regulates muscle function. Component of the large ribosomal subunit in striated muscle cells: replaces the RPL3 paralog in the ribosome in these cells. The ribosome is a large ribonucleoprotein complex responsible for the synthesis of proteins in the cell. Inhibits myotube growth and muscle function. The sequence is that of Large ribosomal subunit protein uL3-like (RPL3L) from Bos taurus (Bovine).